The chain runs to 375 residues: Alcohol dehydrogenase 1 (375 aa).

Serine 2 bears the N-acetylserine mark. Positions 47, 68, 98, 101, 104, 112, and 175 each coordinate Zn(2+). NAD(+) contacts are provided by residues tryptophan 200–glycine 205, aspartate 224, and lysine 229. The residue at position 234 (lysine 234) is an N6-succinyllysine. Residue valine 293–valine 295 coordinates NAD(+). Residue lysine 340 is modified to N6-succinyllysine. Position 370 (arginine 370) interacts with NAD(+).

The protein belongs to the zinc-containing alcohol dehydrogenase family. Class-I subfamily. Homodimer. Zn(2+) is required as a cofactor.

It localises to the cytoplasm. The enzyme catalyses a primary alcohol + NAD(+) = an aldehyde + NADH + H(+). It carries out the reaction a secondary alcohol + NAD(+) = a ketone + NADH + H(+). In Geomys knoxjonesi (Jones' pocket gopher), this protein is Alcohol dehydrogenase 1 (ADH1).